The following is a 129-amino-acid chain: Small ribosomal subunit protein uS11 (129 aa).

Belongs to the universal ribosomal protein uS11 family. Part of the 30S ribosomal subunit. Interacts with proteins S7 and S18. Binds to IF-3.

In terms of biological role, located on the platform of the 30S subunit, it bridges several disparate RNA helices of the 16S rRNA. Forms part of the Shine-Dalgarno cleft in the 70S ribosome. This Rhodopseudomonas palustris (strain BisB5) protein is Small ribosomal subunit protein uS11.